A 67-amino-acid polypeptide reads, in one-letter code: MPKMKTKSSAKKRFKITASGKVLAAAAGKRHGMIKRSNKFIRNARGTMVLAEADGKKVIKNYLPNGL.

Belongs to the bacterial ribosomal protein bL35 family.

The chain is Large ribosomal subunit protein bL35 from Allorhizobium ampelinum (strain ATCC BAA-846 / DSM 112012 / S4) (Agrobacterium vitis (strain S4)).